We begin with the raw amino-acid sequence, 171 residues long: uncharacterized protein (171 aa).

In terms of biological role, required for production of the bacteriocin SkfA. This is an uncharacterized protein from Bacillus subtilis (strain 168).